The following is a 208-amino-acid chain: Octanoyltransferase (208 aa).

A BPL/LPL catalytic domain is found at 30 to 208; sequence GTASEAVFIL…ILKQEFYKIF (179 aa). Residues 69–76, 142–144, and 155–157 each bind substrate; these read RGGKFTYH, SIG, and GVA. Cys-173 functions as the Acyl-thioester intermediate in the catalytic mechanism.

It belongs to the LipB family.

It localises to the cytoplasm. It carries out the reaction octanoyl-[ACP] + L-lysyl-[protein] = N(6)-octanoyl-L-lysyl-[protein] + holo-[ACP] + H(+). It participates in protein modification; protein lipoylation via endogenous pathway; protein N(6)-(lipoyl)lysine from octanoyl-[acyl-carrier-protein]: step 1/2. Functionally, catalyzes the transfer of endogenously produced octanoic acid from octanoyl-acyl-carrier-protein onto the lipoyl domains of lipoate-dependent enzymes. Lipoyl-ACP can also act as a substrate although octanoyl-ACP is likely to be the physiological substrate. The polypeptide is Octanoyltransferase (Orientia tsutsugamushi (strain Boryong) (Rickettsia tsutsugamushi)).